The chain runs to 203 residues: Probable chemoreceptor glutamine deamidase CheD (203 aa).

It belongs to the CheD family.

It catalyses the reaction L-glutaminyl-[protein] + H2O = L-glutamyl-[protein] + NH4(+). In terms of biological role, probably deamidates glutamine residues to glutamate on methyl-accepting chemotaxis receptors (MCPs), playing an important role in chemotaxis. The chain is Probable chemoreceptor glutamine deamidase CheD from Janthinobacterium sp. (strain Marseille) (Minibacterium massiliensis).